The sequence spans 216 residues: uncharacterized protein (216 aa).

This is an uncharacterized protein from Saccharomyces cerevisiae (strain ATCC 204508 / S288c) (Baker's yeast).